A 348-amino-acid polypeptide reads, in one-letter code: RNA 3'-terminal phosphate cyclase (348 aa).

ATP is bound by residues Gln-102 and 285–288; that span reads HMGD. His-311 acts as the Tele-AMP-histidine intermediate in catalysis.

This sequence belongs to the RNA 3'-terminal cyclase family. Type 1 subfamily.

The protein localises to the cytoplasm. The catalysed reaction is a 3'-end 3'-phospho-ribonucleotide-RNA + ATP = a 3'-end 2',3'-cyclophospho-ribonucleotide-RNA + AMP + diphosphate. Catalyzes the conversion of 3'-phosphate to a 2',3'-cyclic phosphodiester at the end of RNA. The mechanism of action of the enzyme occurs in 3 steps: (A) adenylation of the enzyme by ATP; (B) transfer of adenylate to an RNA-N3'P to produce RNA-N3'PP5'A; (C) and attack of the adjacent 2'-hydroxyl on the 3'-phosphorus in the diester linkage to produce the cyclic end product. The biological role of this enzyme is unknown but it is likely to function in some aspects of cellular RNA processing. This Korarchaeum cryptofilum (strain OPF8) protein is RNA 3'-terminal phosphate cyclase.